The primary structure comprises 106 residues: L-rhamnose mutarotase (106 aa).

Tyr-20 is a binding site for substrate. Residue His-24 is the Proton donor of the active site. Residues Tyr-43 and 78–79 (WW) contribute to the substrate site.

It belongs to the rhamnose mutarotase family. Homodimer.

The protein resides in the cytoplasm. It catalyses the reaction alpha-L-rhamnose = beta-L-rhamnose. It participates in carbohydrate metabolism; L-rhamnose metabolism. Its function is as follows. Involved in the anomeric conversion of L-rhamnose. In Verminephrobacter eiseniae (strain EF01-2), this protein is L-rhamnose mutarotase.